Reading from the N-terminus, the 158-residue chain is Transcription elongation factor GreA (158 aa).

Belongs to the GreA/GreB family.

Necessary for efficient RNA polymerase transcription elongation past template-encoded arresting sites. The arresting sites in DNA have the property of trapping a certain fraction of elongating RNA polymerases that pass through, resulting in locked ternary complexes. Cleavage of the nascent transcript by cleavage factors such as GreA or GreB allows the resumption of elongation from the new 3'terminus. GreA releases sequences of 2 to 3 nucleotides. In Psychrobacter sp. (strain PRwf-1), this protein is Transcription elongation factor GreA.